Reading from the N-terminus, the 468-residue chain is N-acyl-phosphatidylethanolamine-hydrolyzing phospholipase D, mitochondrial (468 aa).

A mitochondrion-targeting transit peptide spans 1–39 (MNFVTCHVQMRLLLQRRLVRLRESELFRPQTSLSTFKRH). The helical transmembrane segment at 54 to 76 (YARILLLSVLVPYTGYAFYVSLA) threads the bilayer. His265, His267, Asp269, His270, His332, and His425 together coordinate Zn(2+).

The protein belongs to the NAPE-PLD family. Requires Zn(2+) as cofactor.

The protein localises to the mitochondrion membrane. The catalysed reaction is an N-acyl-1,2-diacyl-sn-glycero-3-phosphoethanolamine + H2O = an N-acylethanolamine + a 1,2-diacyl-sn-glycero-3-phosphate + H(+). Functionally, hydrolyzes N-acyl-phosphatidylethanolamines (NAPEs) to produce N-acylethanolamines (NAEs). The sequence is that of N-acyl-phosphatidylethanolamine-hydrolyzing phospholipase D, mitochondrial (FMP30) from Saccharomyces cerevisiae (strain ATCC 204508 / S288c) (Baker's yeast).